The chain runs to 486 residues: Cobyric acid synthase (486 aa).

In terms of domain architecture, GATase cobBQ-type spans 248-435 (VLNVVVPVLP…LHGLFESPAA (188 aa)). The active-site Nucleophile is the cysteine 329. The active site involves histidine 427.

This sequence belongs to the CobB/CobQ family. CobQ subfamily.

It functions in the pathway cofactor biosynthesis; adenosylcobalamin biosynthesis. Catalyzes amidations at positions B, D, E, and G on adenosylcobyrinic A,C-diamide. NH(2) groups are provided by glutamine, and one molecule of ATP is hydrogenolyzed for each amidation. This is Cobyric acid synthase from Pseudomonas syringae pv. syringae (strain B728a).